Here is a 275-residue protein sequence, read N- to C-terminus: DNA repair protein RecO (275 aa).

The tract at residues 1-38 (MTDEADADPQPFAAPPATGAPAADKPARKPRRAAPRTS) is disordered. A compositionally biased stretch (low complexity) spans 8–24 (DPQPFAAPPATGAPAAD).

The protein belongs to the RecO family.

In terms of biological role, involved in DNA repair and RecF pathway recombination. In Burkholderia pseudomallei (strain 1710b), this protein is DNA repair protein RecO.